A 128-amino-acid chain; its full sequence is DNA-directed RNA polymerase subunit omega (128 aa).

Residues 87–106 are disordered; sequence ARSSQAAPKSAPGQEIGKSF.

The protein belongs to the RNA polymerase subunit omega family. In terms of assembly, the RNAP catalytic core consists of 2 alpha, 1 beta, 1 beta' and 1 omega subunit. When a sigma factor is associated with the core the holoenzyme is formed, which can initiate transcription.

It carries out the reaction RNA(n) + a ribonucleoside 5'-triphosphate = RNA(n+1) + diphosphate. Its function is as follows. Promotes RNA polymerase assembly. Latches the N- and C-terminal regions of the beta' subunit thereby facilitating its interaction with the beta and alpha subunits. This Anaplasma marginale (strain Florida) protein is DNA-directed RNA polymerase subunit omega.